A 506-amino-acid chain; its full sequence is Apolipoprotein N-acyltransferase (506 aa).

6 helical membrane-spanning segments follow: residues 24–44, 58–78, 85–105, 125–145, 162–182, and 192–212; these read LALAPFDFWPLVLVSVAMFYL, GWCYGFGLYGAGTSWIYVSIH, ALLAGLLMLLFIAAIALFFAL, LAFAALWLWQEAFRGWFLTGF, LAPVGGVWLISFALGLTAALL, and KSFLAMGVLLLLAPWVAGLAL. Residues 230 to 470 enclose the CN hydrolase domain; sequence MQGNIEQSMK…RGVLYGEVVP (241 aa). The active-site Proton acceptor is glutamate 269. The active site involves lysine 330. Cysteine 382 (nucleophile) is an active-site residue. The chain crosses the membrane as a helical span at residues 482 to 502; the sequence is SWPLAIVCLLLFGWALLAARI.

It belongs to the CN hydrolase family. Apolipoprotein N-acyltransferase subfamily.

Its subcellular location is the cell inner membrane. The catalysed reaction is N-terminal S-1,2-diacyl-sn-glyceryl-L-cysteinyl-[lipoprotein] + a glycerophospholipid = N-acyl-S-1,2-diacyl-sn-glyceryl-L-cysteinyl-[lipoprotein] + a 2-acyl-sn-glycero-3-phospholipid + H(+). It participates in protein modification; lipoprotein biosynthesis (N-acyl transfer). In terms of biological role, catalyzes the phospholipid dependent N-acylation of the N-terminal cysteine of apolipoprotein, the last step in lipoprotein maturation. This chain is Apolipoprotein N-acyltransferase, found in Pseudomonas syringae pv. tomato (strain ATCC BAA-871 / DC3000).